We begin with the raw amino-acid sequence, 359 residues long: GTP cyclohydrolase FolE2 (359 aa).

It belongs to the GTP cyclohydrolase IV family.

It catalyses the reaction GTP + H2O = 7,8-dihydroneopterin 3'-triphosphate + formate + H(+). Its pathway is cofactor biosynthesis; 7,8-dihydroneopterin triphosphate biosynthesis; 7,8-dihydroneopterin triphosphate from GTP: step 1/1. Converts GTP to 7,8-dihydroneopterin triphosphate. In Cereibacter sphaeroides (strain ATCC 17029 / ATH 2.4.9) (Rhodobacter sphaeroides), this protein is GTP cyclohydrolase FolE2.